Here is a 240-residue protein sequence, read N- to C-terminus: Glutathione S-transferase omega-1 (240 aa).

Residue Ser-2 is modified to N-acetylserine. The region spanning 22–101 (GQIRVYSMRF…YLDEAYPEKK (80 aa)) is the GST N-terminal domain. Cys-32 acts as the Nucleophile in catalysis. Position 57 is an N6-acetyllysine (Lys-57). Glutathione is bound by residues Lys-59, Val-72, and 85-86 (ES). Residues 106 to 227 (DPYKKARQKM…AKTYREYLNL (122 aa)) form the GST C-terminal domain. Ser-129 carries the phosphoserine modification. Lys-152 is modified (N6-acetyllysine).

This sequence belongs to the GST superfamily. Omega family. Homodimer.

It localises to the cytoplasm. Its subcellular location is the cytosol. The enzyme catalyses RX + glutathione = an S-substituted glutathione + a halide anion + H(+). It catalyses the reaction L-dehydroascorbate + 2 glutathione = glutathione disulfide + L-ascorbate. The catalysed reaction is methylarsonate + 2 glutathione + H(+) = methylarsonous acid + glutathione disulfide + H2O. Its function is as follows. Exhibits glutathione-dependent thiol transferase and dehydroascorbate reductase activities. Has S-(phenacyl)glutathione reductase activity. Also has glutathione S-transferase activity. Participates in the biotransformation of inorganic arsenic and reduces monomethylarsonic acid (MMA) and dimethylarsonic acid. The chain is Glutathione S-transferase omega-1 (Gsto1) from Mus musculus (Mouse).